Reading from the N-terminus, the 20-residue chain is Cytolysin tenebrosin-A (20 aa).

Positions 3 to 12 (AVAGAVIEGA) are plays an important role in the hemolytic activity. Positions 11–20 (GATLTFEVLQ) are N-terminal region.

It belongs to the actinoporin family. Sea anemone subfamily. In terms of assembly, octamer or nonamer in membranes. Monomer in the soluble state.

It is found in the secreted. The protein resides in the nematocyst. It localises to the target cell membrane. Pore-forming protein that forms cations-selective hydrophilic pores of around 1 nm and causes cardiac stimulation and cytolysis. Pore formation is a multi-step process that involves specific recognition of membrane sphingomyelin (but neither cholesterol nor phosphatidylcholine) using aromatic rich region and adjacent phosphocholine (POC) binding site, firm binding to the membrane (mainly driven by hydrophobic interactions) accompanied by the transfer of the N-terminal region to the lipid-water interface and finally pore formation after oligomerization of monomers. This Actinia tenebrosa (Australian red waratah sea anemone) protein is Cytolysin tenebrosin-A.